A 100-amino-acid chain; its full sequence is Small ribosomal subunit protein uS14c (100 aa).

This sequence belongs to the universal ribosomal protein uS14 family. In terms of assembly, part of the 30S ribosomal subunit.

The protein resides in the plastid. Binds 16S rRNA, required for the assembly of 30S particles. The chain is Small ribosomal subunit protein uS14c from Cuscuta obtusiflora (Peruvian dodder).